The following is a 348-amino-acid chain: MRIEQELKLGFKDVLFRPKRSTLKSRSQVNLTREFTFKHSGRQWSGVPVIAANMDSVGSFEMAKALSQHGVMTAIHKHYTVQDWADFVKDADSETLNKVMVSTGTSEADFQKTKDVMALSDELIFICIDIANGYSEHLVQYVQQVRAAFPDKVISAGNVVTGDMVEELILAGADIVKVGIGPGSVCTTRVKTGVGYPQLSAIIECADAAHGLGGRIIGDGGCACAGDVAKAFGGGADFVMLGGMLAGHEESGGEIVLKDGESYMKFYGMSSKSAMDKHSGGVAGYRAAEGKTVLLPYRGSVHGTIQDILGGVRSTCTYVGAAELRELTKRTTFIRVLEQENNVFGKEK.

108–131 (ADFQKTKDVMALSDELIFICIDIA) is a binding site for NADP(+). Positions 181 and 183 each coordinate K(+). The active-site Thioimidate intermediate is Cys186. Position 216 to 239 (216 to 239 (IIGDGGCACAGDVAKAFGGGADFV)) interacts with NADP(+).

It belongs to the IMPDH/GMPR family. GuaC type 1 subfamily. As to quaternary structure, homotetramer.

The catalysed reaction is IMP + NH4(+) + NADP(+) = GMP + NADPH + 2 H(+). Catalyzes the irreversible NADPH-dependent deamination of GMP to IMP. It functions in the conversion of nucleobase, nucleoside and nucleotide derivatives of G to A nucleotides, and in maintaining the intracellular balance of A and G nucleotides. This chain is GMP reductase, found in Vibrio vulnificus (strain CMCP6).